A 272-amino-acid chain; its full sequence is Regulatory factor X-associated protein (272 aa).

3 disordered regions span residues 1–20, 74–142, and 175–195; these read MEAQ…GVPH, LCEG…KTCT, and KKKK…GSAG. Over residues 79-94 the composition is skewed to acidic residues; the sequence is GDGEEEAGEDEADLLD. The short motif at 163-178 is the Nuclear localization signal element; the sequence is KKHRNKMYKDKYKKKK. Lys198 is covalently cross-linked (Glycyl lysine isopeptide (Lys-Gly) (interchain with G-Cter in SUMO2)). Positions 214 to 270 are C-terminal domain; sequence TGSFGDRPARPTLLEQVLNQKRLSLLRSPEVVQFLQKQQQLLNQQVLEQRQQQFPGT.

In terms of assembly, the RFX heterotetrameric complex consists of 2 molecules of RFX5 and one each of RFXAP and RFX-B/RFXANK; with each subunit representing a separate complementation group. RFX forms cooperative DNA binding complexes with X2BP and CBF/NF-Y. RFX associates with CIITA to form an active transcriptional complex. Phosphorylated. Ubiquitous.

It is found in the nucleus. In terms of biological role, part of the RFX complex that binds to the X-box of MHC II promoters. This Homo sapiens (Human) protein is Regulatory factor X-associated protein (RFXAP).